The following is a 634-amino-acid chain: Dynein axonemal assembly factor 1 (634 aa).

The tract at residues Met1 to Pro80 is disordered. Positions Ala22–Glu42 are enriched in basic and acidic residues. Over residues Cys48–Asn62 the composition is skewed to polar residues. Over residues His70 to Pro80 the composition is skewed to basic and acidic residues. LRR repeat units follow at residues Ala101–Thr123, Gly124–Ser145, Glu146–Gln167, Lys168–Pro189, Val190–Arg211, and Arg215–Glu236. One can recognise an LRRCT domain in the interval Asn249–Trp288. The segment covering Glu326–Glu336 has biased composition (basic and acidic residues). A disordered region spans residues Glu326–Met358. Ser349 is modified (phosphoserine). Thr462 carries the phosphothreonine modification. Phosphoserine occurs at positions 465 and 488. Disordered stretches follow at residues Ile481–Thr505 and Glu559–Asp634.

It belongs to the DNAAF1 family.

The protein resides in the cell projection. It is found in the cilium. Functionally, cilium-specific protein required for the stability of the ciliary architecture. Plays a role in cytoplasmic preassembly of dynein arms. Involved in regulation of microtubule-based cilia and actin-based brush border microvilli. The polypeptide is Dynein axonemal assembly factor 1 (Dnaaf1) (Mus musculus (Mouse)).